The chain runs to 76 residues: Esculentin-2-ALa (76 aa).

Positions Met1–Cys22 are cleaved as a signal peptide. Residues Glu23–Arg39 constitute a propeptide that is removed on maturation. An intrachain disulfide couples Cys70 to Cys76.

In terms of tissue distribution, expressed by the skin glands.

The protein resides in the secreted. In terms of biological role, antimicrobial peptide with activity against Gram-positive and Gram-negative bacteria and against fungi. Has been tested against S.aureus (MIC=2.5 ug/mL), B.pumilus (MIC=2.5 ug/mL), B.cereus (MIC=7.5 ug/mL), E.coli (MIC=12.5 ug/mL), B.dysenteriae (MIC=7.5 ug/mL), A.cacoaceticus (MIC=25.0 ug/mL), P.aeruginosa (MIC=50.0 ug/mL) and C.albicans (MIC=2.5 ug/mL). Also shows a weak hemolytic activity. The polypeptide is Esculentin-2-ALa (Amolops loloensis (Lolokou Sucker Frog)).